Consider the following 201-residue polypeptide: E3 ubiquitin-protein ligase MIR1 (201 aa).

An RING-CH-type zinc finger spans residues 1–58 (MDSTGEFCWICHQPEGPLKRFCGCKGSCAVSHQDCLRGWLETSRRQTCALCGTPYSMK). At 1–81 (MDSTGEFCWI…EEVLAAMEAC (81 aa)) the chain is on the cytoplasmic side. Residues Cys8, Cys11, Cys22, Cys24, His32, Cys35, Cys48, and Cys51 each contribute to the Zn(2+) site. The tract at residues 52–79 (GTPYSMKWKTKPLREWTWGEEEVLAAME) is DIRT. Residues 82-102 (LPLVLIPLAVLMIVMGTWLLV) form a helical membrane-spanning segment. Topologically, residues 103–113 (NHNGFLSPRMQ) are extracellular. Residues 114 to 134 (VVLVVIVLLAMIVFSASASYV) traverse the membrane as a helical segment. The Cytoplasmic segment spans residues 135–201 (MVEGPGCLDT…RLGCVRLCCV (67 aa)).

In terms of assembly, interacts with host UBE2J2.

Its subcellular location is the host endoplasmic reticulum membrane. It catalyses the reaction [E2 ubiquitin-conjugating enzyme]-S-ubiquitinyl-L-cysteine + [acceptor protein]-L-cysteine = [E2 ubiquitin-conjugating enzyme]-L-cysteine + [acceptor protein]-S-ubiquitinyl-L-cysteine.. Its pathway is protein modification; protein ubiquitination. E3 ubiquitin-protein ligase that mediates ubiquitination of host surface class I (MHC-I) H-2D(b)/H2-D1 and H-2K(b)/H2-K1 molecules before they exit the endoplasmic reticulum, leading to their degradation by the endoplasmic reticulum-associated degradation (ERAD) system, thus blocking the immune detection of virus-infected cells. Mediates ubiquitination of lysine, as well as serine and threonine residues present in the cytoplasmic tail of surface class I molecules. Promotes ubiquitination of hydroxylated serine or threonine residues via ester bonds instead of the classical isopeptide linkage. This Murid herpesvirus 4 (MuHV-4) protein is E3 ubiquitin-protein ligase MIR1 (K3).